The following is a 204-amino-acid chain: Recombination protein RecR (204 aa).

Residues 61-76 (CARCNTFSETQICSTC) form a C4-type zinc finger. Positions 84–183 (SLLCIVETPA…KVTRIARGIP (100 aa)) constitute a Toprim domain.

The protein belongs to the RecR family.

Functionally, may play a role in DNA repair. It seems to be involved in an RecBC-independent recombinational process of DNA repair. It may act with RecF and RecO. The protein is Recombination protein RecR of Polynucleobacter asymbioticus (strain DSM 18221 / CIP 109841 / QLW-P1DMWA-1) (Polynucleobacter necessarius subsp. asymbioticus).